The chain runs to 469 residues: Probable indole-3-acetic acid-amido synthetase GH3.13 (469 aa).

The segment at 1 to 26 (MTSTSSENAPDHDHDHDASSPAPATA) is disordered. The span at 9–18 (APDHDHDHDA) shows a compositional bias: basic and acidic residues.

Belongs to the IAA-amido conjugating enzyme family.

May catalyze the synthesis of indole-3-acetic acid (IAA)-amino acid conjugates, providing a mechanism for the plant to cope with the presence of excess auxin. The polypeptide is Probable indole-3-acetic acid-amido synthetase GH3.13 (GH3.13) (Oryza sativa subsp. japonica (Rice)).